Reading from the N-terminus, the 538-residue chain is Chaperonin GroEL (538 aa).

ATP is bound by residues 29–32 (TLGP), 86–90 (DGTTT), Gly413, 479–481 (DAL), and Asp495.

It belongs to the chaperonin (HSP60) family. In terms of assembly, forms a cylinder of 14 subunits composed of two heptameric rings stacked back-to-back. Interacts with the co-chaperonin GroES.

The protein localises to the cytoplasm. It carries out the reaction ATP + H2O + a folded polypeptide = ADP + phosphate + an unfolded polypeptide.. Together with its co-chaperonin GroES, plays an essential role in assisting protein folding. The GroEL-GroES system forms a nano-cage that allows encapsulation of the non-native substrate proteins and provides a physical environment optimized to promote and accelerate protein folding. The chain is Chaperonin GroEL from Fervidobacterium nodosum (strain ATCC 35602 / DSM 5306 / Rt17-B1).